A 1706-amino-acid chain; its full sequence is DDT domain-containing protein PTM (1706 aa).

The segment covering methionine 1–glutamine 16 has biased composition (basic residues). Disordered stretches follow at residues methionine 1–asparagine 27 and valine 144–aspartate 168. The short motif at arginine 9–leucine 18 is the Nuclear localization signal element. Over residues glutamate 148–glutamate 160 the composition is skewed to acidic residues. The DDT domain occupies glutamate 192 to arginine 252. Positions tyrosine 375 to serine 393 are enriched in basic and acidic residues. The interval tyrosine 375 to aspartate 408 is disordered. Residues arginine 394–aspartate 408 show a composition bias toward polar residues. The segment at serine 411–asparagine 458 adopts a PHD-type 1 zinc-finger fold. Disordered regions lie at residues lysine 1165–lysine 1194 and threonine 1311–proline 1345. Polar residues-rich tracts occupy residues proline 1167 to lysine 1194 and threonine 1311 to aspartate 1323. The span at aspartate 1325–lysine 1336 shows a compositional bias: basic and acidic residues. 5 helical membrane passes run alanine 1539–proline 1559, leucine 1569–leucine 1589, alanine 1596–isoleucine 1616, alanine 1624–leucine 1644, and methionine 1682–isoleucine 1702.

Interacts (via the DDT domain) with CHR11 (via C-terminus).

The protein resides in the plastid. Its subcellular location is the chloroplast outer membrane. It is found in the nucleus. Its function is as follows. Membrane-bound transcription factor required for the plastid-to-nucleus retrograde signaling. Functions in multiple retrograde pathways. The plastid-to-nucleus signal plays an important role in the coordinated expression of both nuclear- and chloroplast-localized genes that encode photosynthesis-related proteins. In the nucleus, activates ABI4 transcription in a PHD-dependent manner associated with histone modifications. Localized primarily in the chloroplast outer membrane as dormant form and, in response to retrograde signals, is released from the membrane through proteolytic cleavage and its cleaved fragment containing the transcription factor domain is redistributed to the nucleus, where it regulates the expression of particular nuclear genes. In Arabidopsis thaliana (Mouse-ear cress), this protein is DDT domain-containing protein PTM.